Consider the following 231-residue polypeptide: Large ribosomal subunit protein uL1 (231 aa).

It belongs to the universal ribosomal protein uL1 family. As to quaternary structure, part of the 50S ribosomal subunit.

Functionally, binds directly to 23S rRNA. The L1 stalk is quite mobile in the ribosome, and is involved in E site tRNA release. Its function is as follows. Protein L1 is also a translational repressor protein, it controls the translation of the L11 operon by binding to its mRNA. The protein is Large ribosomal subunit protein uL1 of Halorhodospira halophila (strain DSM 244 / SL1) (Ectothiorhodospira halophila (strain DSM 244 / SL1)).